A 633-amino-acid polypeptide reads, in one-letter code: Probably inactive receptor-like protein kinase At2g46850 (633 aa).

The first 28 residues, 1–28, serve as a signal peptide directing secretion; sequence MPPLFLPSSSSALFLLLLLLLTLQTLTS. The Extracellular segment spans residues 29–285; sequence ISLSQPQALR…IKKHNGKKLT (257 aa). Residues Asn45, Asn69, and Asn231 are each glycosylated (N-linked (GlcNAc...) asparagine). A helical transmembrane segment spans residues 286–306; sequence VLAGVLAPLFILGSLLALFCL. The Cytoplasmic segment spans residues 307-633; the sequence is LKRPVTSHKD…SPDSIYLPKT (327 aa). One can recognise a Protein kinase domain in the interval 355 to 633; sequence FQDSQKLTQG…SPDSIYLPKT (279 aa). ATP-binding positions include 361–369 and Lys384; that span reads LTQGKTGTI.

It belongs to the protein kinase superfamily. Ser/Thr protein kinase family.

It localises to the membrane. The chain is Probably inactive receptor-like protein kinase At2g46850 from Arabidopsis thaliana (Mouse-ear cress).